The primary structure comprises 288 residues: 4-hydroxy-tetrahydrodipicolinate synthase (288 aa).

Threonine 47 is a pyruvate binding site. Tyrosine 136 functions as the Proton donor/acceptor in the catalytic mechanism. The Schiff-base intermediate with substrate role is filled by lysine 164. Isoleucine 204 lines the pyruvate pocket.

It belongs to the DapA family. Homotetramer; dimer of dimers.

It localises to the cytoplasm. The catalysed reaction is L-aspartate 4-semialdehyde + pyruvate = (2S,4S)-4-hydroxy-2,3,4,5-tetrahydrodipicolinate + H2O + H(+). Its pathway is amino-acid biosynthesis; L-lysine biosynthesis via DAP pathway; (S)-tetrahydrodipicolinate from L-aspartate: step 3/4. Catalyzes the condensation of (S)-aspartate-beta-semialdehyde [(S)-ASA] and pyruvate to 4-hydroxy-tetrahydrodipicolinate (HTPA). This is 4-hydroxy-tetrahydrodipicolinate synthase from Leuconostoc mesenteroides subsp. mesenteroides (strain ATCC 8293 / DSM 20343 / BCRC 11652 / CCM 1803 / JCM 6124 / NCDO 523 / NBRC 100496 / NCIMB 8023 / NCTC 12954 / NRRL B-1118 / 37Y).